We begin with the raw amino-acid sequence, 312 residues long: Aspartoacylase (312 aa).

Zn(2+) contacts are provided by His20 and Glu23. N-acetyl-L-aspartate is bound by residues Arg62, Asn69, and Arg70. His115 serves as a coordination point for Zn(2+). Positions 163 and 167 each coordinate N-acetyl-L-aspartate. Glu177 serves as the catalytic Proton donor/acceptor. Tyr287 serves as a coordination point for N-acetyl-L-aspartate.

The protein belongs to the AspA/AstE family. Aspartoacylase subfamily. As to quaternary structure, homodimer. Zn(2+) is required as a cofactor. In terms of tissue distribution, detected in kidney proximal tubule cells (at protein level).

The protein localises to the cytoplasm. The protein resides in the nucleus. It carries out the reaction an N-acyl-L-aspartate + H2O = a carboxylate + L-aspartate. The enzyme catalyses N-acetyl-L-aspartate + H2O = L-aspartate + acetate. In terms of biological role, catalyzes the deacetylation of N-acetylaspartic acid (NAA) to produce acetate and L-aspartate. NAA occurs in high concentration in brain and its hydrolysis NAA plays a significant part in the maintenance of intact white matter. In other tissues it acts as a scavenger of NAA from body fluids. The chain is Aspartoacylase from Rattus norvegicus (Rat).